Consider the following 880-residue polypeptide: Valine--tRNA ligase (880 aa).

The 'HIGH' region signature appears at 47-57 (PNITGKLHLGH). Residues 526 to 530 (KMSKS) carry the 'KMSKS' region motif. Lysine 529 serves as a coordination point for ATP. The stretch at 810–845 (LLDLVDREKELERLNKEKTKLEGEILRVEKKLSNER) forms a coiled coil.

This sequence belongs to the class-I aminoacyl-tRNA synthetase family. ValS type 1 subfamily. In terms of assembly, monomer.

The protein resides in the cytoplasm. It catalyses the reaction tRNA(Val) + L-valine + ATP = L-valyl-tRNA(Val) + AMP + diphosphate. In terms of biological role, catalyzes the attachment of valine to tRNA(Val). As ValRS can inadvertently accommodate and process structurally similar amino acids such as threonine, to avoid such errors, it has a 'posttransfer' editing activity that hydrolyzes mischarged Thr-tRNA(Val) in a tRNA-dependent manner. The polypeptide is Valine--tRNA ligase (Clostridium perfringens (strain 13 / Type A)).